The following is a 236-amino-acid chain: Small ribosomal subunit protein uS2c (236 aa).

The protein belongs to the universal ribosomal protein uS2 family.

Its subcellular location is the plastid. It localises to the chloroplast. This is Small ribosomal subunit protein uS2c (rps2) from Lemna minor (Common duckweed).